A 391-amino-acid chain; its full sequence is Chaperone protein DnaJ (391 aa).

The J domain maps to 2 to 67 (DYYDVLGVSK…QKRESYDRYG (66 aa)). A CR-type zinc finger spans residues 148–226 (GVKKELLVSG…CRGQGRIKDK (79 aa)). The Zn(2+) site is built by cysteine 161, cysteine 164, cysteine 178, cysteine 181, cysteine 200, cysteine 203, cysteine 214, and cysteine 217. 4 CXXCXGXG motif repeats span residues 161 to 168 (CETCSGSG), 178 to 185 (CDRCKGSG), 200 to 207 (CPECGGEG), and 214 to 221 (CSSCRGQG).

Belongs to the DnaJ family. In terms of assembly, homodimer. Zn(2+) is required as a cofactor.

The protein resides in the cytoplasm. In terms of biological role, participates actively in the response to hyperosmotic and heat shock by preventing the aggregation of stress-denatured proteins and by disaggregating proteins, also in an autonomous, DnaK-independent fashion. Unfolded proteins bind initially to DnaJ; upon interaction with the DnaJ-bound protein, DnaK hydrolyzes its bound ATP, resulting in the formation of a stable complex. GrpE releases ADP from DnaK; ATP binding to DnaK triggers the release of the substrate protein, thus completing the reaction cycle. Several rounds of ATP-dependent interactions between DnaJ, DnaK and GrpE are required for fully efficient folding. Also involved, together with DnaK and GrpE, in the DNA replication of plasmids through activation of initiation proteins. This is Chaperone protein DnaJ from Chlamydia abortus (strain DSM 27085 / S26/3) (Chlamydophila abortus).